A 336-amino-acid chain; its full sequence is Mitochondrial fission regulator 2 (336 aa).

Positions Gln-139–Ala-166 form a coiled coil. The disordered stretch occupies residues His-296 to Leu-336. The span at Arg-297 to Ser-309 shows a compositional bias: basic and acidic residues. Residues Gln-325 to Leu-336 show a composition bias toward basic residues.

The protein belongs to the MTFR1 family.

The protein localises to the mitochondrion. Its function is as follows. May play a role in mitochondrial aerobic respiration. Can also promote mitochondrial fission. In Danio rerio (Zebrafish), this protein is Mitochondrial fission regulator 2 (mtfr2).